We begin with the raw amino-acid sequence, 508 residues long: Flagellin (508 aa).

Belongs to the bacterial flagellin family.

It is found in the secreted. Its subcellular location is the bacterial flagellum. Functionally, flagellin is the subunit protein which polymerizes to form the filaments of bacterial flagella. This Salmonella oranienberg protein is Flagellin (fliC).